We begin with the raw amino-acid sequence, 160 residues long: Large ribosomal subunit protein eL14 (160 aa).

The interval 136–160 (SDGTPRILKKDRRERLRAEKAKAKK) is disordered. Residues 146–160 (DRRERLRAEKAKAKK) are compositionally biased toward basic and acidic residues.

Belongs to the eukaryotic ribosomal protein eL14 family.

The chain is Large ribosomal subunit protein eL14 (RpL14) from Drosophila virilis (Fruit fly).